The primary structure comprises 267 residues: Tryptophan synthase alpha chain (267 aa).

Residues Glu51 and Asp62 each act as proton acceptor in the active site.

It belongs to the TrpA family. In terms of assembly, tetramer of two alpha and two beta chains.

It carries out the reaction (1S,2R)-1-C-(indol-3-yl)glycerol 3-phosphate + L-serine = D-glyceraldehyde 3-phosphate + L-tryptophan + H2O. Its pathway is amino-acid biosynthesis; L-tryptophan biosynthesis; L-tryptophan from chorismate: step 5/5. Functionally, the alpha subunit is responsible for the aldol cleavage of indoleglycerol phosphate to indole and glyceraldehyde 3-phosphate. The sequence is that of Tryptophan synthase alpha chain from Prochlorococcus marinus (strain SARG / CCMP1375 / SS120).